A 532-amino-acid chain; its full sequence is Cytokinin dehydrogenase 1 (532 aa).

An N-terminal signal peptide occupies residues 1–17; it reads MAAIYLLIAALIASSHA. N-linked (GlcNAc...) asparagine glycosylation is found at Asn52 and Asn63. The FAD-binding PCMH-type domain occupies 65–244; that stretch reads TAALPAAVLF…TRARVAVEPA (180 aa). FAD is bound by residues Phe100, Gly102, Arg103, and Gly104. Pros-8alpha-FAD histidine is present on His105. Residues Ser106 and Gln110 each contribute to the FAD site. Asn133 is a glycosylation site (N-linked (GlcNAc...) asparagine). Residues Asp168, Thr173, Ser179, Val183, and Ile234 each contribute to the FAD site. 2 N-linked (GlcNAc...) asparagine glycosylation sites follow: Asn321 and Asn432. 3 residues coordinate FAD: Tyr490, Ser525, and Gln528.

Belongs to the oxygen-dependent FAD-linked oxidoreductase family. In terms of assembly, monomer. The cofactor is FAD.

It is found in the secreted. The protein localises to the extracellular space. The catalysed reaction is N(6)-dimethylallyladenine + A + H2O = 3-methyl-2-butenal + adenine + AH2. Functionally, catalyzes the oxidation of cytokinins, a family of N(6)-substituted adenine derivatives that are plant hormones, where the substituent is an isopentenyl group. The sequence is that of Cytokinin dehydrogenase 1 (CKX1) from Oryza sativa subsp. japonica (Rice).